Reading from the N-terminus, the 591-residue chain is Potassium channel KAT4 (591 aa).

At 1–32 (MAARSELLRPAFGEASPSLGRFVINPHSCSYR) the chain is on the cytoplasmic side. A helical transmembrane segment spans residues 33 to 53 (WWHMFLIMLVLYSAWASPFEL). Residues 54–63 (SMEKAASIAL) lie on the Extracellular side of the membrane. The helical transmembrane segment at 64–84 (VVTDLVVDVFFAIDIALSFFV) threads the bilayer. Residues 85–109 (AYRDTSTGLLITDRRKITMRYLKRP) lie on the Cytoplasmic side of the membrane. The helical transmembrane segment at 110–130 (CFALDVASTIPLQIIYQLVTG) threads the bilayer. Residues 131-137 (KRQGLWG) are Extracellular-facing. The chain crosses the membrane as a helical; Voltage-sensor span at residues 138 to 158 (LLNLLRLWRLRRVSKLFARVE). Topologically, residues 159–172 (KDIRFNYLWTRLIK) are cytoplasmic. The helical transmembrane segment at 173-193 (LLCVTLFALHFAACIYLWMAF) threads the bilayer. Over 194 to 220 (NYKIKELTWIGSQIHSFEDRSVWFCYT) the chain is Extracellular. Residues 221–240 (CAVYWSITTLATVGYGDLHA) constitute an intramembrane region (pore-forming). Topologically, residues 241-246 (TNIGEM) are extracellular. The helical transmembrane segment at 247–267 (LFSIAFMLFNMGLTSYIIGNI) threads the bilayer. At 268-591 (TNLVVRETSN…IRDGDHLLFS (324 aa)) the chain is on the cytoplasmic side. 349 to 469 (LFQGVSDSLI…YIVFSNFIQY (121 aa)) contributes to the a nucleoside 3',5'-cyclic phosphate binding site. A KHA domain is found at 521-591 (RVVIHEQLPN…IRDGDHLLFS (71 aa)).

Belongs to the potassium channel family. Plant (TC 1.A.1.4) subfamily.

It is found in the membrane. Functionally, probable inward-rectifying potassium channel. Assuming opened or closed conformations in response to the voltage difference across the membrane, the channel is activated by hyperpolarization. The sequence is that of Potassium channel KAT4 from Oryza sativa subsp. japonica (Rice).